We begin with the raw amino-acid sequence, 416 residues long: MSPTADFDPKPRRASVAVDVGGVIVGGGAPVVVQSMTNTDTADIDSTVAQVAALHRAGSELVRITVDRDESAAAVPKIRERLLRLGMDVPLIGDFHYVGHKLLADHPDCAAALAKYRINPGNVGFKDKKDKQFAEIIEMAIRYDKPVRVGVNWGSLDQDLLTALMDENARAGSPLSARQVTREAIVQSALLSAALAEEIGLPRNRIILSAKVSQVQDLIAVNSMLAERSNHALHLGLTEAGMGTKGIVASSAAMGFVLQHGIGDTIRVSLTPEPNGDRTREVQVAQEILQVMGFRQFIPVVAACPGCGRTTSTVFQELAQNIQNDIRKNMPVWREKYPGVEALNVAVMGCIVNGPGESKHADIGISLPGTGETPAAPVFIDGKKALTLRGPNIAADFEALVVDYIEKRFGQRTAAE.

[4Fe-4S] cluster is bound by residues cysteine 304, cysteine 307, cysteine 350, and glutamate 357.

The protein belongs to the IspG family. [4Fe-4S] cluster serves as cofactor.

It carries out the reaction (2E)-4-hydroxy-3-methylbut-2-enyl diphosphate + oxidized [flavodoxin] + H2O + 2 H(+) = 2-C-methyl-D-erythritol 2,4-cyclic diphosphate + reduced [flavodoxin]. It functions in the pathway isoprenoid biosynthesis; isopentenyl diphosphate biosynthesis via DXP pathway; isopentenyl diphosphate from 1-deoxy-D-xylulose 5-phosphate: step 5/6. In terms of biological role, converts 2C-methyl-D-erythritol 2,4-cyclodiphosphate (ME-2,4cPP) into 1-hydroxy-2-methyl-2-(E)-butenyl 4-diphosphate. This is 4-hydroxy-3-methylbut-2-en-1-yl diphosphate synthase (flavodoxin) from Rhizobium leguminosarum bv. trifolii (strain WSM2304).